The primary structure comprises 408 residues: Zinc finger protein 764 (408 aa).

The KRAB domain maps to Val-26 to Cys-97. Residues Asp-91 to Pro-167 are disordered. C2H2-type zinc fingers lie at residues His-175–His-197, Phe-203–His-225, His-231–His-253, Tyr-259–His-281, Phe-287–His-309, Tyr-315–His-337, and Tyr-343–His-365.

This sequence belongs to the krueppel C2H2-type zinc-finger protein family. In terms of assembly, interacts (via KRAB domain) with NR3C1/GR (via NR LBD domain); the interaction regulates transcription factor activity of NR3C1 by directing its actions toward certain biologic pathways.

Its subcellular location is the nucleus. Functionally, zinc finger protein that functions as a cofactor for steroid hormone receptors, such as NR3C1/GR. Directs NR3C1/GR transcriptional activity toward specific biologic pathways by changing NR3C1/GR binding and transcriptional activity on the glucocorticoid-responsive genes. In Homo sapiens (Human), this protein is Zinc finger protein 764.